The sequence spans 858 residues: Leucine--tRNA ligase (858 aa).

The short motif at 42–52 (PYPSGRLHMGH) is the 'HIGH' region element. The 'KMSKS' region signature appears at 618–622 (KMSKS). Lys621 provides a ligand contact to ATP.

The protein belongs to the class-I aminoacyl-tRNA synthetase family.

It localises to the cytoplasm. The enzyme catalyses tRNA(Leu) + L-leucine + ATP = L-leucyl-tRNA(Leu) + AMP + diphosphate. This is Leucine--tRNA ligase from Photobacterium profundum (strain SS9).